The following is a 131-amino-acid chain: Protein Bouncer (131 aa).

An N-terminal signal peptide occupies residues 1-26 (MGSLRTRQLFHAALLWLCLPLPLLLC). Cystine bridges form between cysteine 31–cysteine 56, cysteine 50–cysteine 74, cysteine 80–cysteine 99, and cysteine 100–cysteine 105. A UPAR/Ly6 domain is found at 31-106 (CYYSPVLEKE…YSCCDWPYCN (76 aa)). Residue asparagine 65 is glycosylated (N-linked (GlcNAc...) asparagine). Asparagine 106 is lipidated: GPI-anchor amidated asparagine. The propeptide at 107-131 (RAVALEPLTAMLVAAAVVACSFCLT) is removed in mature form.

The protein belongs to the SPACA4/bouncer family. As to quaternary structure, interacts with spermatocyte complex composed of izumo1, spaca6 and tmem81. In terms of tissue distribution, expressed in oocytes. Not expressed in testis.

The protein localises to the cell membrane. Its function is as follows. Oocyte-expressed fertilization factor that mediates sperm-egg binding and is essential for sperm entry into the egg. Necessary and sufficient to mediate species-specific gamete recognition and fertilization, which is essential for vertebrate species performing external fertilization. External fertilization cannot guarantee that only conspecific sperm reaches the egg by precopulatory mate choice: proteins such as Bouncer can therefore support the selection of conspecific sperm. This chain is Protein Bouncer, found in Oryzias latipes (Japanese rice fish).